The sequence spans 752 residues: DNA topoisomerase 4 subunit A (752 aa).

One can recognise a Topo IIA-type catalytic domain in the interval 31–494 (LPFIGDGLKP…EAKAMSEHDM (464 aa)). Y120 acts as the O-(5'-phospho-DNA)-tyrosine intermediate in catalysis. Disordered stretches follow at residues 472–492 (YGDDRRSPLQEREEAKAMSEH) and 718–752 (TGERGRRGTLMRGLQRIDRVEIDSPRRASSGDSEE). 2 stretches are compositionally biased toward basic and acidic residues: residues 473–492 (GDDRRSPLQEREEAKAMSEH) and 732–743 (QRIDRVEIDSPR).

This sequence belongs to the type II topoisomerase GyrA/ParC subunit family. ParC type 1 subfamily. As to quaternary structure, heterotetramer composed of ParC and ParE.

It is found in the cell membrane. It catalyses the reaction ATP-dependent breakage, passage and rejoining of double-stranded DNA.. Topoisomerase IV is essential for chromosome segregation. It relaxes supercoiled DNA. Performs the decatenation events required during the replication of a circular DNA molecule. The sequence is that of DNA topoisomerase 4 subunit A from Escherichia coli O157:H7.